The primary structure comprises 375 residues: uncharacterized protein (375 aa).

The Cytoplasmic segment spans residues 1-2 (MR). Residues 3-23 (WYSYVIPAVILSIIAISGVWW) traverse the membrane as a helical; Signal-anchor for type II membrane protein segment. At 24–375 (NATLGTRLDQ…YIEQRLFPQP (352 aa)) the chain is on the lumenal side.

It belongs to the glycosyltransferase 34 family.

It localises to the endoplasmic reticulum membrane. The protein localises to the golgi apparatus membrane. This is an uncharacterized protein from Schizosaccharomyces pombe (strain 972 / ATCC 24843) (Fission yeast).